The primary structure comprises 207 residues: Large ribosomal subunit protein uL4 (207 aa).

The segment at 50 to 76 is disordered; sequence KTKTVSEVSGTTKKPFKQKGTGNARQG.

The protein belongs to the universal ribosomal protein uL4 family. As to quaternary structure, part of the 50S ribosomal subunit.

Its function is as follows. One of the primary rRNA binding proteins, this protein initially binds near the 5'-end of the 23S rRNA. It is important during the early stages of 50S assembly. It makes multiple contacts with different domains of the 23S rRNA in the assembled 50S subunit and ribosome. Functionally, forms part of the polypeptide exit tunnel. This chain is Large ribosomal subunit protein uL4, found in Rickettsia canadensis (strain McKiel).